The chain runs to 258 residues: uncharacterized protein (258 aa).

36–43 lines the ATP pocket; that stretch reads GKAGTGKS.

Belongs to the IIV-6 075L family.

This is an uncharacterized protein from Acheta domesticus (House cricket).